A 270-amino-acid polypeptide reads, in one-letter code: Bis(5'-nucleosyl)-tetraphosphatase, symmetrical (270 aa).

The protein belongs to the Ap4A hydrolase family.

It catalyses the reaction P(1),P(4)-bis(5'-adenosyl) tetraphosphate + H2O = 2 ADP + 2 H(+). In terms of biological role, hydrolyzes diadenosine 5',5'''-P1,P4-tetraphosphate to yield ADP. The sequence is that of Bis(5'-nucleosyl)-tetraphosphatase, symmetrical from Actinobacillus pleuropneumoniae serotype 5b (strain L20).